Consider the following 534-residue polypeptide: NAD(P)H-quinone oxidoreductase chain 4 (534 aa).

A run of 14 helical transmembrane segments spans residues phenylalanine 6–isoleucine 26, tryptophan 38–glutamine 58, methionine 91–valine 111, leucine 117–aspartate 137, leucine 138–isoleucine 158, phenylalanine 171–phenylalanine 191, leucine 214–histidine 234, threonine 245–isoleucine 265, phenylalanine 279–phenylalanine 299, methionine 316–leucine 336, glutamine 337–aspartate 357, isoleucine 377–alanine 399, valine 419–methionine 439, and isoleucine 466–isoleucine 486.

This sequence belongs to the complex I subunit 4 family.

Its subcellular location is the cellular thylakoid membrane. The enzyme catalyses a plastoquinone + NADH + (n+1) H(+)(in) = a plastoquinol + NAD(+) + n H(+)(out). The catalysed reaction is a plastoquinone + NADPH + (n+1) H(+)(in) = a plastoquinol + NADP(+) + n H(+)(out). Functionally, NDH-1 shuttles electrons from NAD(P)H, via FMN and iron-sulfur (Fe-S) centers, to quinones in the respiratory chain. The immediate electron acceptor for the enzyme in this species is believed to be plastoquinone. Couples the redox reaction to proton translocation (for every two electrons transferred, four hydrogen ions are translocated across the cytoplasmic membrane), and thus conserves the redox energy in a proton gradient. In Acaryochloris marina (strain MBIC 11017), this protein is NAD(P)H-quinone oxidoreductase chain 4.